Reading from the N-terminus, the 557-residue chain is Carboxypeptidase Y homolog A (557 aa).

An N-terminal signal peptide occupies residues 1–17 (MRVLPAAMLVGAATAAV). The propeptide occupies 18–138 (PPFQQVLGGN…KLEAYDLRVK (121 aa)). Disulfide bonds link Cys-193/Cys-433, Cys-327/Cys-341, Cys-351/Cys-374, Cys-358/Cys-367, and Cys-396/Cys-403. A glycan (N-linked (GlcNAc...) asparagine) is linked at Asn-224. Ser-280 is an active-site residue. The active site involves Asp-472. N-linked (GlcNAc...) asparagine glycosylation is present at Asn-523. His-534 is a catalytic residue.

It belongs to the peptidase S10 family.

It is found in the vacuole. The catalysed reaction is Release of a C-terminal amino acid with broad specificity.. Its function is as follows. Vacuolar carboxypeptidase involved in degradation of small peptides. Digests preferentially peptides containing an aliphatic or hydrophobic residue in P1' position, as well as methionine, leucine or phenylalanine in P1 position of ester substrate. The sequence is that of Carboxypeptidase Y homolog A (cpyA) from Aspergillus niger (strain ATCC MYA-4892 / CBS 513.88 / FGSC A1513).